The chain runs to 125 residues: Large ribosomal subunit protein bL19 (125 aa).

The protein belongs to the bacterial ribosomal protein bL19 family.

This protein is located at the 30S-50S ribosomal subunit interface and may play a role in the structure and function of the aminoacyl-tRNA binding site. This chain is Large ribosomal subunit protein bL19, found in Wolbachia pipientis wMel.